The primary structure comprises 391 residues: Carbamoyl phosphate synthase small chain (391 aa).

The interval 1–187 (MAGVKERAVL…PLPYAWPTLK (187 aa)) is CPSase. Ser-50, Gly-239, and Gly-241 together coordinate L-glutamine. The Glutamine amidotransferase type-1 domain maps to 191–376 (RIVVMDFGIK…LEEVEAFHGA (186 aa)). Residue Cys-266 is the Nucleophile of the active site. Residues Leu-267, Gln-270, Asn-308, Gly-310, and Tyr-311 each contribute to the L-glutamine site. Catalysis depends on residues His-349 and Glu-351.

This sequence belongs to the CarA family. Composed of two chains; the small (or glutamine) chain promotes the hydrolysis of glutamine to ammonia, which is used by the large (or ammonia) chain to synthesize carbamoyl phosphate. Tetramer of heterodimers (alpha,beta)4.

The enzyme catalyses hydrogencarbonate + L-glutamine + 2 ATP + H2O = carbamoyl phosphate + L-glutamate + 2 ADP + phosphate + 2 H(+). It catalyses the reaction L-glutamine + H2O = L-glutamate + NH4(+). It participates in amino-acid biosynthesis; L-arginine biosynthesis; carbamoyl phosphate from bicarbonate: step 1/1. It functions in the pathway pyrimidine metabolism; UMP biosynthesis via de novo pathway; (S)-dihydroorotate from bicarbonate: step 1/3. Functionally, small subunit of the glutamine-dependent carbamoyl phosphate synthetase (CPSase). CPSase catalyzes the formation of carbamoyl phosphate from the ammonia moiety of glutamine, carbonate, and phosphate donated by ATP, constituting the first step of 2 biosynthetic pathways, one leading to arginine and/or urea and the other to pyrimidine nucleotides. The small subunit (glutamine amidotransferase) binds and cleaves glutamine to supply the large subunit with the substrate ammonia. This is Carbamoyl phosphate synthase small chain from Thermus thermophilus (strain ATCC BAA-163 / DSM 7039 / HB27).